The following is a 427-amino-acid chain: Serine--tRNA ligase (427 aa).

231-233 (TAE) lines the L-serine pocket. Residue 262-264 (RSE) coordinates ATP. Glu-285 contacts L-serine. Residue 349–352 (EISS) participates in ATP binding. Residue Ser-385 coordinates L-serine.

This sequence belongs to the class-II aminoacyl-tRNA synthetase family. Type-1 seryl-tRNA synthetase subfamily. As to quaternary structure, homodimer. The tRNA molecule binds across the dimer.

Its subcellular location is the cytoplasm. It carries out the reaction tRNA(Ser) + L-serine + ATP = L-seryl-tRNA(Ser) + AMP + diphosphate + H(+). The enzyme catalyses tRNA(Sec) + L-serine + ATP = L-seryl-tRNA(Sec) + AMP + diphosphate + H(+). The protein operates within aminoacyl-tRNA biosynthesis; selenocysteinyl-tRNA(Sec) biosynthesis; L-seryl-tRNA(Sec) from L-serine and tRNA(Sec): step 1/1. Catalyzes the attachment of serine to tRNA(Ser). Is also able to aminoacylate tRNA(Sec) with serine, to form the misacylated tRNA L-seryl-tRNA(Sec), which will be further converted into selenocysteinyl-tRNA(Sec). The chain is Serine--tRNA ligase from Rhizobium johnstonii (strain DSM 114642 / LMG 32736 / 3841) (Rhizobium leguminosarum bv. viciae).